The primary structure comprises 640 residues: 1,4-alpha-glucan branching enzyme GlgB (640 aa).

Asp318 (nucleophile) is an active-site residue. Catalysis depends on Glu371, which acts as the Proton donor.

It belongs to the glycosyl hydrolase 13 family. GlgB subfamily. As to quaternary structure, monomer.

The enzyme catalyses Transfers a segment of a (1-&gt;4)-alpha-D-glucan chain to a primary hydroxy group in a similar glucan chain.. The protein operates within glycan biosynthesis; glycogen biosynthesis. Functionally, catalyzes the formation of the alpha-1,6-glucosidic linkages in glycogen by scission of a 1,4-alpha-linked oligosaccharide from growing alpha-1,4-glucan chains and the subsequent attachment of the oligosaccharide to the alpha-1,6 position. The polypeptide is 1,4-alpha-glucan branching enzyme GlgB (Francisella tularensis subsp. mediasiatica (strain FSC147)).